A 275-amino-acid polypeptide reads, in one-letter code: MSSVTMRQMLEAGVHFGHQTRYWNPKMAPFIFGERNKIHIINLEQTLPLFNDAMNYLGKLAGNGGKILFVGTKRSARDTIAEEALRCKMPYVNHRWLGGMLTNFKTVRESIRRLKDLELMREDGTFNRLSKKEALMRTRELEKLERSLGGIKDMNGLPDAMFVIDVGYEKIAVKEANKLGIPVIAVVDTNNSIEGVDYVIPGNDDAMRAIQLYVSAAADAIANAQVTSRATAAPAGDDEFVEVREGAEASKKKATVKKKAAPRAASGESAEAAAE.

Residues 244–275 (REGAEASKKKATVKKKAAPRAASGESAEAAAE) are disordered. Residues 252–261 (KKATVKKKAA) are compositionally biased toward basic residues. The segment covering 262–275 (PRAASGESAEAAAE) has biased composition (low complexity).

It belongs to the universal ribosomal protein uS2 family.

This is Small ribosomal subunit protein uS2 from Thioalkalivibrio sulfidiphilus (strain HL-EbGR7).